A 517-amino-acid polypeptide reads, in one-letter code: Maturase K (517 aa).

Belongs to the intron maturase 2 family. MatK subfamily.

It localises to the plastid. The protein localises to the chloroplast. Functionally, usually encoded in the trnK tRNA gene intron. Probably assists in splicing its own and other chloroplast group II introns. The protein is Maturase K of Trillium maculatum (Spotted wakerobin).